The chain runs to 506 residues: Cytochrome P450 monooxygenase BOA3 (506 aa).

A helical membrane pass occupies residues 15–35 (IYLWIGFVLVVLLAYPTYFAI). Cys451 contributes to the heme binding site.

This sequence belongs to the cytochrome P450 family. Heme is required as a cofactor.

The protein resides in the membrane. It functions in the pathway polyketide biosynthesis. Its function is as follows. Cytochrome P450 monooxygenase; part of the gene cluster A that mediates the biosynthesis of botcinic acid and its botcinin derivatives, acetate-derived polyketides that contribute to virulence when combined with the sesquiterpene botrydial. Botcinic acid and its derivatives have been shown to induce chlorosis and necrosis during host plant infection, but also have antifungal activities. Two polyketide synthases, BOA6 and BOA9, are involved in the biosynthesis of botcinins. BOA6 mediates the formation of the per-methylated tetraketide core by condensation of four units of malonyl-CoA with one unit of acetyl-CoA, which would be methylated in activated methylene groups to yield a bicyclic acid intermediate that could then either be converted to botrylactone derivatives or lose the starter acetate unit through a retro-Claisen type C-C bond cleavage to yield botcinin derivatives. The second polyketide synthase, BOA9, is probably required for the biosynthesis of the tetraketide side chain of botcinins. The methyltransferase (MT) domain within BOA6 is probably responsible for the incorporation of four methyl groups. The trans-enoyl reductase BOA5 might take over the enoyl reductase function of BOA6 that misses an ER domain. The monooxygenases BOA2, BOA3 and BOA4 might be involved in further hydroxylations at C4, C5 and C8, whereas BOA7, close to BOA9, could potentially be involved in the hydroxylation at C4 in the side chain of botcinins. The sequence is that of Cytochrome P450 monooxygenase BOA3 from Botryotinia fuckeliana (strain B05.10) (Noble rot fungus).